We begin with the raw amino-acid sequence, 424 residues long: Imidazolonepropionase (424 aa).

Positions 84 and 86 each coordinate Fe(3+). Residues histidine 84 and histidine 86 each contribute to the Zn(2+) site. Residues arginine 93, tyrosine 156, and histidine 189 each contribute to the 4-imidazolone-5-propanoate site. Position 156 (tyrosine 156) interacts with N-formimidoyl-L-glutamate. Histidine 254 serves as a coordination point for Fe(3+). Histidine 254 contributes to the Zn(2+) binding site. Residue glutamate 257 participates in 4-imidazolone-5-propanoate binding. Position 328 (aspartate 328) interacts with Fe(3+). Residue aspartate 328 coordinates Zn(2+). N-formimidoyl-L-glutamate is bound by residues asparagine 330 and glycine 332. Serine 333 is a 4-imidazolone-5-propanoate binding site.

The protein belongs to the metallo-dependent hydrolases superfamily. HutI family. Requires Zn(2+) as cofactor. It depends on Fe(3+) as a cofactor.

Its subcellular location is the cytoplasm. The catalysed reaction is 4-imidazolone-5-propanoate + H2O = N-formimidoyl-L-glutamate. The protein operates within amino-acid degradation; L-histidine degradation into L-glutamate; N-formimidoyl-L-glutamate from L-histidine: step 3/3. Its function is as follows. Catalyzes the hydrolytic cleavage of the carbon-nitrogen bond in imidazolone-5-propanoate to yield N-formimidoyl-L-glutamate. It is the third step in the universal histidine degradation pathway. The chain is Imidazolonepropionase from Geobacillus thermodenitrificans (strain NG80-2).